The following is a 586-amino-acid chain: Ferredoxin--nitrite reductase, chloroplastic (586 aa).

Residues 1 to 18 (MTSFSLTFTSPLLPSSST) show a composition bias toward low complexity. Residues 1–20 (MTSFSLTFTSPLLPSSSTKP) are disordered. A chloroplast-targeting transit peptide spans 1–25 (MTSFSLTFTSPLLPSSSTKPKRSVL). A Glycyl lysine isopeptide (Lys-Gly) (interchain with G-Cter in ubiquitin) cross-link involves residue Lys-103. 4 residues coordinate [4Fe-4S] cluster: Cys-464, Cys-470, Cys-505, and Cys-509. Cys-509 lines the siroheme pocket.

Belongs to the nitrite and sulfite reductase 4Fe-4S domain family. As to quaternary structure, monomer. Requires siroheme as cofactor. It depends on [4Fe-4S] cluster as a cofactor.

The protein localises to the plastid. Its subcellular location is the chloroplast. It catalyses the reaction 6 oxidized [2Fe-2S]-[ferredoxin] + NH4(+) + 2 H2O = nitrite + 6 reduced [2Fe-2S]-[ferredoxin] + 8 H(+). It participates in nitrogen metabolism; nitrate reduction (assimilation). In terms of biological role, catalyzes the six-electron reduction of nitrite to ammonium. The sequence is that of Ferredoxin--nitrite reductase, chloroplastic (NIR1) from Arabidopsis thaliana (Mouse-ear cress).